A 408-amino-acid polypeptide reads, in one-letter code: Serine/threonine transporter SstT (408 aa).

The next 9 membrane-spanning stretches (helical) occupy residues 19-39 (SLVS…VISP), 48-68 (LGSL…LVLV), 86-106 (IVGL…LLSF), 143-163 (VTAV…GLGF), 193-213 (FAPL…GFSA), 223-243 (VLLS…VFII), 294-314 (IPLG…VLTL), 322-342 (IEVS…SACG), and 367-387 (VAMQ…SAET).

Belongs to the dicarboxylate/amino acid:cation symporter (DAACS) (TC 2.A.23) family.

The protein localises to the cell inner membrane. It carries out the reaction L-serine(in) + Na(+)(in) = L-serine(out) + Na(+)(out). The enzyme catalyses L-threonine(in) + Na(+)(in) = L-threonine(out) + Na(+)(out). Its function is as follows. Involved in the import of serine and threonine into the cell, with the concomitant import of sodium (symport system). The sequence is that of Serine/threonine transporter SstT from Colwellia psychrerythraea (strain 34H / ATCC BAA-681) (Vibrio psychroerythus).